Here is a 278-residue protein sequence, read N- to C-terminus: Small ribosomal subunit protein uS2 (278 aa).

A disordered region spans residues 233 to 258 (IDMEAAGEAPANKGKKKSAKARLDKS).

The protein belongs to the universal ribosomal protein uS2 family.

The protein is Small ribosomal subunit protein uS2 of Bacteroides fragilis (strain ATCC 25285 / DSM 2151 / CCUG 4856 / JCM 11019 / LMG 10263 / NCTC 9343 / Onslow / VPI 2553 / EN-2).